The chain runs to 191 residues: Xanthine phosphoribosyltransferase (191 aa).

Xanthine contacts are provided by Leu-20 and Asn-27. Position 128 to 132 (128 to 132) interacts with 5-phospho-alpha-D-ribose 1-diphosphate; sequence ANGQA. A xanthine-binding site is contributed by Lys-156.

Belongs to the purine/pyrimidine phosphoribosyltransferase family. Xpt subfamily. Homodimer.

The protein resides in the cytoplasm. It catalyses the reaction XMP + diphosphate = xanthine + 5-phospho-alpha-D-ribose 1-diphosphate. Its pathway is purine metabolism; XMP biosynthesis via salvage pathway; XMP from xanthine: step 1/1. Converts the preformed base xanthine, a product of nucleic acid breakdown, to xanthosine 5'-monophosphate (XMP), so it can be reused for RNA or DNA synthesis. In Limosilactobacillus reuteri (strain DSM 20016) (Lactobacillus reuteri), this protein is Xanthine phosphoribosyltransferase.